Consider the following 226-residue polypeptide: tRNA (guanine-N(1)-)-methyltransferase (226 aa).

S-adenosyl-L-methionine is bound by residues glycine 110 and 130-135 (IGDFIL).

Belongs to the RNA methyltransferase TrmD family. In terms of assembly, homodimer.

It localises to the cytoplasm. The enzyme catalyses guanosine(37) in tRNA + S-adenosyl-L-methionine = N(1)-methylguanosine(37) in tRNA + S-adenosyl-L-homocysteine + H(+). Functionally, specifically methylates guanosine-37 in various tRNAs. The chain is tRNA (guanine-N(1)-)-methyltransferase from Nitratiruptor sp. (strain SB155-2).